Here is a 565-residue protein sequence, read N- to C-terminus: NAD-dependent malic enzyme (565 aa).

Catalysis depends on Tyr-104, which acts as the Proton donor. NAD(+) is bound at residue Arg-157. Lys-175 functions as the Proton acceptor in the catalytic mechanism. Glu-246, Asp-247, and Asp-270 together coordinate a divalent metal cation. The NAD(+) site is built by Asp-270 and Asn-418.

This sequence belongs to the malic enzymes family. As to quaternary structure, homotetramer. The cofactor is Mg(2+). Mn(2+) serves as cofactor.

The enzyme catalyses (S)-malate + NAD(+) = pyruvate + CO2 + NADH. It catalyses the reaction oxaloacetate + H(+) = pyruvate + CO2. This Sodalis glossinidius (strain morsitans) protein is NAD-dependent malic enzyme.